Here is an 887-residue protein sequence, read N- to C-terminus: Tubulin polyglutamylase TTLL7 (887 aa).

The tract at residues Met-1–Glu-21 is disordered. In terms of domain architecture, TTL spans Lys-38–Ala-390. ATP is bound by residues Lys-160, Met-166 to Gly-167, Gln-188 to Ile-191, and Lys-201 to Asp-203. Arg-227 is an L-glutamate binding site. Thr-249–Asn-250 contacts ATP. Tyr-251, Ser-252, and Lys-271 together coordinate L-glutamate. Residues Asp-336, Glu-349, and Asn-351 each coordinate Mg(2+). Lys-367 lines the L-glutamate pocket. The interval Asn-388–His-450 is c-MTBD region. 2 disordered regions span residues Met-519–Phe-621 and Leu-651–Gln-676. The span at Ser-548 to Ser-560 shows a compositional bias: low complexity. Polar residues-rich tracts occupy residues Gln-593 to Phe-621 and Asp-656 to Gln-670.

The protein belongs to the tubulin--tyrosine ligase family. As to quaternary structure, interacts with both alpha- and beta-tubulin (via C-terminal tubulin tails). Mg(2+) is required as a cofactor. Highly expressed in the nervous system including spinal cord, thalamus, hippocampus, hypothalamus and cerebellum.

The protein localises to the cell projection. It is found in the cilium. The protein resides in the cytoplasm. Its subcellular location is the cytoskeleton. It localises to the cilium basal body. The protein localises to the dendrite. It is found in the perikaryon. It carries out the reaction L-glutamyl-[protein] + L-glutamate + ATP = gamma-L-glutamyl-L-glutamyl-[protein] + ADP + phosphate + H(+). It catalyses the reaction (L-glutamyl)(n)-gamma-L-glutamyl-L-glutamyl-[protein] + L-glutamate + ATP = (L-glutamyl)(n+1)-gamma-L-glutamyl-L-glutamyl-[protein] + ADP + phosphate + H(+). Its function is as follows. Polyglutamylase which modifies tubulin, generating polyglutamate side chains of variable lengths on the gamma-carboxyl group of specific glutamate residues within the C-terminal tail of tubulin. Mediates both ATP-dependent initiation and elongation steps of the polyglutamylation reaction. Preferentially modifies the beta-tubulin tail over an alpha-tail. Competes with monoglycylase TTLL3 for modification site on beta-tubulin substrate, thereby creating an anticorrelation between glycylation and glutamylation reactions. Required for neurite growth; responsible for the strong increase in tubulin polyglutamylation during postnatal neuronal maturation. The chain is Tubulin polyglutamylase TTLL7 from Homo sapiens (Human).